Consider the following 32-residue polypeptide: Natriuretic peptide Coa_NP1 (32 aa).

Residues Cys-8 and Cys-24 are joined by a disulfide bond.

The protein belongs to the natriuretic peptide family. Snake NP subfamily. In terms of tissue distribution, expressed by the venom gland.

The protein resides in the secreted. In terms of biological role, snake venom natriuretic peptide that exhibits hypotensive and vasodepressor activity in rats. This is Natriuretic peptide Coa_NP1 from Crotalus lutosus abyssus (Grand Canyon rattlesnake).